Consider the following 528-residue polypeptide: Abrin-d (528 aa).

A Pyrrolidone carboxylic acid modification is found at Gln-1. Glu-164 is a catalytic residue. N-linked (GlcNAc...) asparagine glycosylation is present at Asn-200. Intrachain disulfides connect Cys-247/Cys-269, Cys-286/Cys-305, and Cys-329/Cys-346. The Ricin B-type lectin 1 domain maps to 273–400 (YEPTVRIGGR…YLMRQGWRTG (128 aa)). The 1-alpha repeat unit spans residues 283-325 (DGMCVDVYDDGYHNGNRIIAWKCKDRLEENQLWTLKSDLTIRS). A 1-beta repeat occupies 326–366 (NGKCLTTEGYAPGNYVMIYDCTSAVAEATYWEIWDNGTIIN). N-linked (GlcNAc...) asparagine glycans are attached at residues Asn-361 and Asn-401. One copy of the 1-gamma repeat lies at 369 to 401 (SALVLSAESSSMGGTLTVQTNEYLMRQGWRTGN). One can recognise a Ricin B-type lectin 2 domain in the interval 403–527 (TSPFVTSISG…GKPNQIWLTL (125 aa)). One copy of the 2-alpha repeat lies at 414 to 449 (SDLCMQAQGSNVWLADCDNNKKEQQWALYTDGSIRS). Cystine bridges form between Cys-417–Cys-430 and Cys-456–Cys-473. Residues 453-492 (TNNCLTSKDHKQGSPIVLMACSNGWASQRWLFKNDGSIYS) form a 2-beta repeat. The stretch at 495–528 (DDMVMDVKGSDPSLKQIILWPYTGKPNQIWLTLF) is one 2-gamma repeat.

The protein in the N-terminal section; belongs to the ribosome-inactivating protein family. Type 2 RIP subfamily. As to quaternary structure, disulfide-linked dimer of A and B chains.

It carries out the reaction Endohydrolysis of the N-glycosidic bond at one specific adenosine on the 28S rRNA.. Its function is as follows. The A chain is responsible for inhibiting protein synthesis through the catalytic inactivation of 60S ribosomal subunits by removing adenine from position 4,324 of 28S rRNA. The B chain is a galactose-specific lectin that facilitates the binding of abrin to the cell membrane that precedes endocytosis. The protein is Abrin-d of Abrus precatorius (Indian licorice).